Here is a 1066-residue protein sequence, read N- to C-terminus: UPF0182 protein BL1029 (1066 aa).

Residues 12 to 74 form a disordered region; the sequence is GNGGDSRRNN…KPASGGSGGS (63 aa). A compositionally biased stretch (low complexity) spans 44-61; it reads NAGPSGSSRPPRGPANPR. Helical transmembrane passes span 77 to 97, 126 to 146, 179 to 199, 235 to 255, 282 to 302, 326 to 346, and 372 to 392; these read SKILIGVVLALAIIVGLFFGL, LWVAYALLMALTGFVSAWLAI, VAVVISLIVGVIFGSQFNANW, VLAAVAMLLGVGLVFSVVTHV, LGIWLMLNMFAWAVRQMIGVF, VTFIMAALTAILGVVLGIWLM, and VTSIAVVVVVGLVLTVAWPVL. The disordered stretch occupies residues 977–1044; sequence DSGAAAGDAE…SQSAMKNGDW (68 aa). Polar residues predominate over residues 989–998; it reads SGDQSGSDTN. The segment covering 1003–1016 has biased composition (low complexity); sequence GTTDGKSDSGSSSD.

The protein belongs to the UPF0182 family.

Its subcellular location is the cell membrane. The protein is UPF0182 protein BL1029 of Bifidobacterium longum (strain NCC 2705).